Reading from the N-terminus, the 238-residue chain is Survival of motor neuron-related-splicing factor 30 (238 aa).

In terms of domain architecture, Tudor spans 72–132; that stretch reads SWKVGEKCMA…RPVEEGRKAK (61 aa). Positions 142-160 match the Nuclear localization signal motif; it reads KKEMIAAQREYKKKKALKK.

This sequence belongs to the SMN family. In terms of assembly, associates with spliceosomes.

Its subcellular location is the nucleus speckle. The protein localises to the nucleus. It is found in the cajal body. Its function is as follows. Involved in spliceosome assembly. The chain is Survival of motor neuron-related-splicing factor 30 (smndc1) from Xenopus tropicalis (Western clawed frog).